Consider the following 184-residue polypeptide: UPF0398 protein BCG9842_B3730 (184 aa).

Belongs to the UPF0398 family.

This is UPF0398 protein BCG9842_B3730 from Bacillus cereus (strain G9842).